The chain runs to 309 residues: Porphobilinogen deaminase (309 aa).

An S-(dipyrrolylmethanemethyl)cysteine modification is found at Cys-242.

The protein belongs to the HMBS family. As to quaternary structure, monomer. Dipyrromethane is required as a cofactor.

It carries out the reaction 4 porphobilinogen + H2O = hydroxymethylbilane + 4 NH4(+). It participates in porphyrin-containing compound metabolism; protoporphyrin-IX biosynthesis; coproporphyrinogen-III from 5-aminolevulinate: step 2/4. Functionally, tetrapolymerization of the monopyrrole PBG into the hydroxymethylbilane pre-uroporphyrinogen in several discrete steps. In Actinobacillus succinogenes (strain ATCC 55618 / DSM 22257 / CCUG 43843 / 130Z), this protein is Porphobilinogen deaminase.